Reading from the N-terminus, the 344-residue chain is Glycerol-3-phosphate dehydrogenase [NAD(P)+] (344 aa).

Residues S11, W12, H32, R33, and K105 each contribute to the NADPH site. Positions 105, 135, and 137 each coordinate sn-glycerol 3-phosphate. A139 provides a ligand contact to NADPH. Positions 190, 243, 253, 254, and 255 each coordinate sn-glycerol 3-phosphate. K190 (proton acceptor) is an active-site residue. Position 254 (R254) interacts with NADPH. NADPH contacts are provided by V278 and E280.

This sequence belongs to the NAD-dependent glycerol-3-phosphate dehydrogenase family.

It is found in the cytoplasm. It carries out the reaction sn-glycerol 3-phosphate + NAD(+) = dihydroxyacetone phosphate + NADH + H(+). The enzyme catalyses sn-glycerol 3-phosphate + NADP(+) = dihydroxyacetone phosphate + NADPH + H(+). The protein operates within membrane lipid metabolism; glycerophospholipid metabolism. Functionally, catalyzes the reduction of the glycolytic intermediate dihydroxyacetone phosphate (DHAP) to sn-glycerol 3-phosphate (G3P), the key precursor for phospholipid synthesis. In Oceanobacillus iheyensis (strain DSM 14371 / CIP 107618 / JCM 11309 / KCTC 3954 / HTE831), this protein is Glycerol-3-phosphate dehydrogenase [NAD(P)+].